Reading from the N-terminus, the 184-residue chain is Ribosome-recycling factor (184 aa).

Belongs to the RRF family.

The protein localises to the cytoplasm. Its function is as follows. Responsible for the release of ribosomes from messenger RNA at the termination of protein biosynthesis. May increase the efficiency of translation by recycling ribosomes from one round of translation to another. The protein is Ribosome-recycling factor of Clostridium botulinum (strain Okra / Type B1).